The sequence spans 87 residues: MHPLVDELTLSRYLTHGTSVLSSSLYSVAFFLFFFPNFLFFCSCPNHKWVSLPFIGMDILEALCFYREGKIRNIFEIGGLLLQSFYN.

The chain crosses the membrane as a helical span at residues 21 to 41 (LSSSLYSVAFFLFFFPNFLFF).

The protein resides in the membrane. This is an uncharacterized protein from Saccharomyces cerevisiae (strain ATCC 204508 / S288c) (Baker's yeast).